A 393-amino-acid polypeptide reads, in one-letter code: Ornithine decarboxylase 2 (393 aa).

K62 is subject to N6-(pyridoxal phosphate)lysine. Pyridoxal 5'-phosphate contacts are provided by residues S194, G231, and 265-268; that span reads EPGR. 314–315 is a binding site for substrate; it reads YY. The Proton donor; shared with dimeric partner role is filled by C343. D344 serves as a coordination point for substrate. Y371 is a binding site for pyridoxal 5'-phosphate.

The protein belongs to the Orn/Lys/Arg decarboxylase class-II family. As to quaternary structure, homodimer. Only the dimer is catalytically active, as the active sites are constructed of residues from both monomers. Pyridoxal 5'-phosphate is required as a cofactor.

The enzyme catalyses L-ornithine + H(+) = putrescine + CO2. The protein operates within amine and polyamine biosynthesis; putrescine biosynthesis via L-ornithine pathway; putrescine from L-ornithine: step 1/1. With respect to regulation, inhibited by antizyme (AZ) in response to polyamine levels. AZ inhibits the assembly of the functional homodimer by binding to ODC monomers and targeting them for ubiquitin-independent proteolytic destruction by the 26S proteasome. Its function is as follows. Catalyzes the first and rate-limiting step of polyamine biosynthesis that converts ornithine into putrescine, which is the precursor for the polyamines, spermidine and spermine. Polyamines are essential for cell proliferation and are implicated in cellular processes, ranging from DNA replication to apoptosis. The protein is Ornithine decarboxylase 2 (Odc2) of Drosophila melanogaster (Fruit fly).